A 1120-amino-acid polypeptide reads, in one-letter code: Prophage side tail fiber protein homolog StfR (1120 aa).

Disordered stretches follow at residues 129–154 (KSASDASTSAREAATHAADAADSARA), 221–442 (SAST…ATRA), and 960–1021 (SGRA…AGAH). 3 stretches are compositionally biased toward low complexity: residues 221-239 (SASTATTKASEAATSARDA), 248-395 (SSET…SASA), and 402-442 (RQAS…ATRA). A compositionally biased stretch (polar residues) spans 985 to 1021 (DLGTKTTSSFDYGTKSTNNTGAHTHSVSGSTNSAGAH).

The protein belongs to the tail fiber family.

The polypeptide is Prophage side tail fiber protein homolog StfR (stfR) (Escherichia coli (strain K12)).